The following is a 147-amino-acid chain: Hemoglobin subunit epsilon (147 aa).

One can recognise a Globin domain in the interval 3 to 147 (HLTAEEKAAI…VAIALGHKYH (145 aa)). Phosphoserine occurs at positions 14 and 51. His-64 and His-93 together coordinate heme b.

Belongs to the globin family. As to quaternary structure, heterotetramer of two alpha chains and two epsilon chains in early embryonic hemoglobin Gower-2; two zeta chains and two epsilon chains in early embryonic hemoglobin Gower-1. Red blood cells.

Its function is as follows. The epsilon chain is a beta-type chain of early mammalian embryonic hemoglobin. The polypeptide is Hemoglobin subunit epsilon (HBE1) (Ateles belzebuth (White-bellied spider monkey)).